The chain runs to 379 residues: Adenylosuccinate synthetase (379 aa).

Residues 11 to 17 (GDEGKGK) and 39 to 41 (GHT) each bind GTP. D12 serves as the catalytic Proton acceptor. Mg(2+) contacts are provided by D12 and G39. IMP-binding positions include 12–15 (DEGK), 37–40 (NAGH), T127, R141, Q223, T238, and R302. H40 serves as the catalytic Proton donor. 298-304 (TTTGRGR) is a binding site for substrate. Residues R304 and 330-332 (KLD) each bind GTP.

This sequence belongs to the adenylosuccinate synthetase family. Homodimer. Mg(2+) serves as cofactor.

The protein resides in the cytoplasm. The enzyme catalyses IMP + L-aspartate + GTP = N(6)-(1,2-dicarboxyethyl)-AMP + GDP + phosphate + 2 H(+). It participates in purine metabolism; AMP biosynthesis via de novo pathway; AMP from IMP: step 1/2. Functionally, plays an important role in the de novo pathway of purine nucleotide biosynthesis. Catalyzes the first committed step in the biosynthesis of AMP from IMP. In Methanosarcina mazei (strain ATCC BAA-159 / DSM 3647 / Goe1 / Go1 / JCM 11833 / OCM 88) (Methanosarcina frisia), this protein is Adenylosuccinate synthetase.